Here is an 84-residue protein sequence, read N- to C-terminus: Toxin Tf2 (84 aa).

The N-terminal stretch at 1–20 is a signal peptide; that stretch reads MKRFLLFISILMMIGTIVVG. An LCN-type CS-alpha/beta domain is found at 21–83; that stretch reads KEGYAMDHEG…VWDYATNKCG (63 aa). Disulfide bonds link Cys31–Cys82, Cys35–Cys58, Cys43–Cys63, and Cys47–Cys65. The residue at position 82 (Cys82) is a Cysteine amide.

It belongs to the long (4 C-C) scorpion toxin superfamily. Sodium channel inhibitor family. Beta subfamily. Post-translationally, contains 4 disulfide bonds. Expressed by the venom gland.

The protein resides in the secreted. Its function is as follows. Beta toxins bind voltage-independently at site-4 of sodium channels (Nav) and shift the voltage of activation toward more negative potentials thereby affecting sodium channel activation and promoting spontaneous and repetitive firing. This toxin is active against hNav1.3/SCN3A. The polypeptide is Toxin Tf2 (Tityus fasciolatus (Central Brazilian scorpion)).